We begin with the raw amino-acid sequence, 421 residues long: Acyl-coenzyme A thioesterase 1 (421 aa).

Catalysis depends on charge relay system residues S232, D326, and H360.

The protein belongs to the C/M/P thioester hydrolase family. Monomer.

The protein localises to the cytoplasm. It localises to the cytosol. It carries out the reaction hexadecanoyl-CoA + H2O = hexadecanoate + CoA + H(+). The enzyme catalyses decanoyl-CoA + H2O = decanoate + CoA + H(+). It catalyses the reaction dodecanoyl-CoA + H2O = dodecanoate + CoA + H(+). The catalysed reaction is tetradecanoyl-CoA + H2O = tetradecanoate + CoA + H(+). It carries out the reaction octadecanoyl-CoA + H2O = octadecanoate + CoA + H(+). The enzyme catalyses eicosanoyl-CoA + H2O = eicosanoate + CoA + H(+). It catalyses the reaction (9Z)-octadecenoyl-CoA + H2O = (9Z)-octadecenoate + CoA + H(+). The catalysed reaction is (9Z)-hexadecenoyl-CoA + H2O = (9Z)-hexadecenoate + CoA + H(+). It carries out the reaction (9E)-octadecenoyl-CoA + H2O = (9E)-octadecenoate + CoA + H(+). The protein operates within lipid metabolism; fatty acid metabolism. Its function is as follows. Catalyzes the hydrolysis of acyl-CoAs into free fatty acids and coenzyme A (CoASH), regulating their respective intracellular levels. More active towards saturated and unsaturated long chain fatty acyl-CoAs (C12-C20). The sequence is that of Acyl-coenzyme A thioesterase 1 (ACOT1) from Homo sapiens (Human).